Here is a 492-residue protein sequence, read N- to C-terminus: Gamma-aminobutyric acid receptor subunit alpha-3 (492 aa).

Residues 1-28 (MIITQTSHCYMTSLGILFLINILPGTTG) form the signal peptide. The segment at 28–54 (GQGESRRQEPGDFVKQDIGGLSPKHAP) is disordered. Residues 29-274 (QGESRRQEPG…MTTHFHLKRK (246 aa)) are Extracellular-facing. Residues 31–42 (ESRRQEPGDFVK) are compositionally biased toward basic and acidic residues. Asparagine 63 is a glycosylation site (N-linked (GlcNAc...) asparagine). Arginine 119 contacts 4-aminobutanoate. Residues asparagine 163 and asparagine 176 are each glycosylated (N-linked (GlcNAc...) asparagine). Position 182 (threonine 182) interacts with 4-aminobutanoate. A disulfide bond links cysteine 191 and cysteine 205. N-linked (GlcNAc...) asparagine glycosylation is present at asparagine 228. The helical transmembrane segment at 275 to 295 (IGYFVIQTYLPCIMTVILSQV) threads the bilayer. Residues 296–305 (SFWLNRESVP) are Cytoplasmic-facing. A helical transmembrane segment spans residues 306 to 325 (ARTVFGVTTVLTMTTLSISA). Residues 326 to 336 (RNSLPKVAYAT) lie on the Extracellular side of the membrane. The chain crosses the membrane as a helical span at residues 337–357 (AMDWFIAVCYAFVFSALIEFA). The Cytoplasmic portion of the chain corresponds to 358–457 (TVNYFTKRSW…TYNSVSKVDK (100 aa)). Residue serine 426 is modified to Phosphoserine. Threonine 427 carries the post-translational modification Phosphothreonine. Phosphoserine is present on residues serine 433 and serine 442. Residues 458 to 478 (ISRIIFPVLFAIFNLVYWATY) traverse the membrane as a helical segment. Over 479–492 (VNRESAIKGMIRKQ) the chain is Extracellular.

This sequence belongs to the ligand-gated ion channel (TC 1.A.9) family. Gamma-aminobutyric acid receptor (TC 1.A.9.5) subfamily. GABRA3 sub-subfamily. Heteropentamer, formed by a combination of alpha (GABRA1-6), beta (GABRB1-3), gamma (GABRG1-3), delta (GABRD), epsilon (GABRE), rho (GABRR1-3), pi (GABRP) and theta (GABRQ) chains, each subunit exhibiting distinct physiological and pharmacological properties. Binds UBQLN1. Interacts with GPHN.

The protein localises to the postsynaptic cell membrane. It is found in the cell membrane. The catalysed reaction is chloride(in) = chloride(out). Its activity is regulated as follows. Potentiated by etomidate, propofol, pregnanolone and flurazepam. In terms of biological role, alpha subunit of the heteropentameric ligand-gated chloride channel gated by gamma-aminobutyric acid (GABA), a major inhibitory neurotransmitter in the brain. GABA-gated chloride channels, also named GABA(A) receptors (GABAAR), consist of five subunits arranged around a central pore and contain GABA active binding site(s) located at the alpha and beta subunit interface(s). When activated by GABA, GABAARs selectively allow the flow of chloride anions across the cell membrane down their electrochemical gradient. Chloride influx into the postsynaptic neuron following GABAAR opening decreases the neuron ability to generate a new action potential, thereby reducing nerve transmission. The polypeptide is Gamma-aminobutyric acid receptor subunit alpha-3 (Homo sapiens (Human)).